The primary structure comprises 125 residues: Inner membrane protein YbaN (125 aa).

At 1-6 (MQRIIL) the chain is on the cytoplasmic side. Residues 7-26 (IIIGWLAVVLGTLGVVLPVL) form a helical membrane-spanning segment. At 27-45 (PTTPFILLAAWCFARSSPR) the chain is on the periplasmic side. Residues 46-63 (FHAWLLYRSWFGSYLRFW) form a helical membrane-spanning segment. The Cytoplasmic portion of the chain corresponds to 64–74 (QKHHAMPRGVK). The helical transmembrane segment at 75 to 92 (PRAILLILLTFAISLWFV) threads the bilayer. Topologically, residues 93 to 95 (QMP) are periplasmic. Residues 96–118 (WVRIMLLVILACLLFYMWRIPVI) traverse the membrane as a helical segment. At 119 to 125 (DEKQEKH) the chain is on the cytoplasmic side.

The protein localises to the cell inner membrane. This Escherichia coli O157:H7 protein is Inner membrane protein YbaN (ybaN).